The primary structure comprises 404 residues: Glucose-1-phosphate adenylyltransferase (404 aa).

Residues Tyr99, Gly164, 179 to 180 (EK), and Ser197 each bind alpha-D-glucose 1-phosphate.

Belongs to the bacterial/plant glucose-1-phosphate adenylyltransferase family.

It carries out the reaction alpha-D-glucose 1-phosphate + ATP + H(+) = ADP-alpha-D-glucose + diphosphate. Its pathway is glycan biosynthesis; glycogen biosynthesis. In terms of biological role, involved in the biosynthesis of ADP-glucose, a building block, required in the biosynthesis of maltose-1-phosphate (M1P) and in the elongation reactions to produce linear alpha-1,4-glucans. Catalyzes the reaction between ATP and alpha-D-glucose 1-phosphate (G1P) to produce pyrophosphate and ADP-Glc. The sequence is that of Glucose-1-phosphate adenylyltransferase from Mycolicibacterium gilvum (strain PYR-GCK) (Mycobacterium gilvum (strain PYR-GCK)).